A 187-amino-acid polypeptide reads, in one-letter code: Elongation factor P (187 aa).

This sequence belongs to the elongation factor P family.

It localises to the cytoplasm. It functions in the pathway protein biosynthesis; polypeptide chain elongation. Functionally, involved in peptide bond synthesis. Stimulates efficient translation and peptide-bond synthesis on native or reconstituted 70S ribosomes in vitro. Probably functions indirectly by altering the affinity of the ribosome for aminoacyl-tRNA, thus increasing their reactivity as acceptors for peptidyl transferase. This chain is Elongation factor P, found in Tolumonas auensis (strain DSM 9187 / NBRC 110442 / TA 4).